The primary structure comprises 101 residues: Large ribosomal subunit protein uL24 (101 aa).

The protein belongs to the universal ribosomal protein uL24 family. In terms of assembly, part of the 50S ribosomal subunit.

Its function is as follows. One of two assembly initiator proteins, it binds directly to the 5'-end of the 23S rRNA, where it nucleates assembly of the 50S subunit. One of the proteins that surrounds the polypeptide exit tunnel on the outside of the subunit. The chain is Large ribosomal subunit protein uL24 from Dinoroseobacter shibae (strain DSM 16493 / NCIMB 14021 / DFL 12).